A 360-amino-acid chain; its full sequence is 45 kDa calcium-binding protein (360 aa).

The signal sequence occupies residues 1-29; it reads MVSKQAFLFSLGSLYLSLLFVFLLMDVYA. The N-linked (GlcNAc...) asparagine glycan is linked to asparagine 33. EF-hand domains follow at residues 96 to 131, 135 to 170, 231 to 266, 276 to 311, and 312 to 347; these read RNRR…KTEE, EAVN…SKGF, MLKF…TVEN, WVRD…MNEY, and NALN…FTGS. Aspartate 109, asparagine 111, aspartate 113, glutamine 115, glutamate 120, aspartate 148, aspartate 150, aspartate 152, histidine 154, glutamate 159, aspartate 244, aspartate 246, aspartate 248, lysine 250, glutamate 255, aspartate 289, asparagine 291, aspartate 293, glutamate 300, aspartate 325, asparagine 327, aspartate 329, histidine 331, and glutamate 336 together coordinate Ca(2+).

Belongs to the CREC family.

Its subcellular location is the golgi apparatus lumen. In terms of biological role, may regulate calcium-dependent activities in the endoplasmic reticulum lumen or post-ER compartment. The polypeptide is 45 kDa calcium-binding protein (sdf4) (Xenopus tropicalis (Western clawed frog)).